A 507-amino-acid polypeptide reads, in one-letter code: MGPPLAQELTQACNQPLAATSNLQPDDGYKIELRAENGVDKYPAKQHARKVAAQIRQGKGLIFLMGQKSTLHEDSDQERSLRQRRYFFYLSGVDEADCDLTYDIKTDKLTLYVPDFDLRRAIWMGPTLERKSALQKFDVDEVNYHSALDEDVKKWAKNQGPGSTIYLLHGSQGPTDNPSNVIIDTKTLKLAMDACRVIKDEHEIQLIRRANDISAAAHIEILRGITSMSNESHVEGSFLNTCVSLGAHKQAYQIIAASGSNAATLHYSKNNEPLRGRQFVCLDAGAEWNCYASDVTRTFPITHQWPSIEAKQIYQLVQEMQESCIALVKEGVRYLDLHFLAHNILIKGFLTLGIFKGGTLDEVKKSGASLLFFPHGLGHYIGLEVHDVSPQSIMAQGINDDSNNMLILPTCVSPCTTSSPALTSGMVITIEPGIYFSQLALENAKPEQLKYIDMARVKNYMAVGGVRIEDDILVTKTGHENLTKVPKGDDMLEIIRQGKKGNDSHHV.

Mn(2+) contacts are provided by aspartate 283, aspartate 294, glutamate 431, and glutamate 469.

The protein belongs to the peptidase M24B family. Mn(2+) is required as a cofactor.

The catalysed reaction is Release of any N-terminal amino acid, including proline, that is linked to proline, even from a dipeptide or tripeptide.. Functionally, catalyzes the removal of a penultimate prolyl residue from the N-termini of peptides. In Ajellomyces capsulatus (strain NAm1 / WU24) (Darling's disease fungus), this protein is Probable Xaa-Pro aminopeptidase HCAG_02413.